Here is a 328-residue protein sequence, read N- to C-terminus: E3 ubiquitin-protein ligase RING1-like (328 aa).

N-acetylserine is present on serine 2. Residues 216-257 (CAVCMDEFEDGSDVKQMPCKHVFHQDCLLPWLELHNSCPVCR) form an RING-type; atypical zinc finger. The interval 264-328 (DPDYENRSQG…NLETRGEDLD (65 aa)) is disordered. Residues 306 to 319 (SGSGSGAPGTGGGN) show a composition bias toward gly residues.

Post-translationally, auto-ubiquitinated as part of the enzymatic reaction. Expressed in leaves, roots, trichomes, stipules, and also in anthers and stigma of flowers.

It catalyses the reaction S-ubiquitinyl-[E2 ubiquitin-conjugating enzyme]-L-cysteine + [acceptor protein]-L-lysine = [E2 ubiquitin-conjugating enzyme]-L-cysteine + N(6)-ubiquitinyl-[acceptor protein]-L-lysine.. It participates in protein modification; protein ubiquitination. Its function is as follows. E3 ubiquitin-protein ligase which accepts ubiquitin from an E2 ubiquitin-conjugating enzyme in the form of a thioester and then directly transfers the ubiquitin to targeted substrates. Promotes polyubiquitination of target proteins. The protein is E3 ubiquitin-protein ligase RING1-like of Arabidopsis thaliana (Mouse-ear cress).